Here is an 817-residue protein sequence, read N- to C-terminus: LisH domain-containing protein ARMC9 (817 aa).

A LisH domain is found at 7-39 (HESELLGLVKEYLDFAEFEDTLKTFSKECKVKG). Residues 204–230 (GPNSKELLQQLHQQLVEAERRAMTYLK) are a coiled coil. Serine 583 is modified (phosphoserine). 2 disordered regions span residues 637-659 (RKGP…TPGG) and 761-817 (CKPQ…SIRK). The span at 765–774 (VPSTPETVEQ) shows a compositional bias: polar residues. Residues 793-807 (PQQASRPASTASSTR) are compositionally biased toward low complexity. A compositionally biased stretch (polar residues) spans 808–817 (GLHSSQSIRK).

As to quaternary structure, interacts with TOGARAM1, CCDC66, CEP104, CSPP1 and CEP290. Interacts with NDUFAF2.

Its subcellular location is the cytoplasm. The protein resides in the cytoskeleton. It is found in the cilium basal body. The protein localises to the cell projection. It localises to the cilium. Its subcellular location is the microtubule organizing center. The protein resides in the centrosome. It is found in the centriole. Its function is as follows. Involved in ciliogenesis. It is required for appropriate acetylation and polyglutamylation of ciliary microtubules, and regulation of cilium length. Acts as a positive regulator of hedgehog (Hh) signaling. May participate in the trafficking and/or retention of GLI2 and GLI3 proteins at the ciliary tip. The chain is LisH domain-containing protein ARMC9 from Mus musculus (Mouse).